The following is a 293-amino-acid chain: MPWIQLKLNTTGANAEDLSDALMEAGAVSITFQDTHDTPVFEPLPGETRLWGDTDVIGLFDAETDMNDVVAILENHPLLGAGFAHKIEQLEDKDWEREWMDNFHPMRFGERLWICPSWRDVPDENAVNVMLDPGLAFGTGTHPTTSLCLQWLDSLDLTDKTVIDFGCGSGILAIAALKLGAAKAIGIDIDPQAIQASRDNAERNGVSDRLELYLPKDQPEEMKADVVVANILAGPLRELAPLISVLPVSGGLLGLSGILASQAESVCEAYADSFALDPVVEKEEWCRITGRKN.

Thr-145, Gly-166, Asp-188, and Asn-230 together coordinate S-adenosyl-L-methionine.

Belongs to the methyltransferase superfamily. PrmA family.

It localises to the cytoplasm. It catalyses the reaction L-lysyl-[protein] + 3 S-adenosyl-L-methionine = N(6),N(6),N(6)-trimethyl-L-lysyl-[protein] + 3 S-adenosyl-L-homocysteine + 3 H(+). Functionally, methylates ribosomal protein L11. This chain is Ribosomal protein L11 methyltransferase, found in Escherichia coli O8 (strain IAI1).